The following is a 337-amino-acid chain: Ketol-acid reductoisomerase (NADP(+)) (337 aa).

The region spanning 3-183 (VEMFYDDDAD…GGTRAGVIKT (181 aa)) is the KARI N-terminal Rossmann domain. NADP(+)-binding positions include 26-29 (YGSQ), Ser52, Ser54, and 84-87 (DTAQ). His109 is an active-site residue. Gly135 contributes to the NADP(+) binding site. Positions 184–329 (TFKEETETDL…AKLRGLMSWV (146 aa)) constitute a KARI C-terminal knotted domain. 4 residues coordinate Mg(2+): Asp192, Glu196, Glu228, and Glu232. Substrate is bound at residue Ser253.

This sequence belongs to the ketol-acid reductoisomerase family. It depends on Mg(2+) as a cofactor.

It carries out the reaction (2R)-2,3-dihydroxy-3-methylbutanoate + NADP(+) = (2S)-2-acetolactate + NADPH + H(+). It catalyses the reaction (2R,3R)-2,3-dihydroxy-3-methylpentanoate + NADP(+) = (S)-2-ethyl-2-hydroxy-3-oxobutanoate + NADPH + H(+). The protein operates within amino-acid biosynthesis; L-isoleucine biosynthesis; L-isoleucine from 2-oxobutanoate: step 2/4. Its pathway is amino-acid biosynthesis; L-valine biosynthesis; L-valine from pyruvate: step 2/4. Functionally, involved in the biosynthesis of branched-chain amino acids (BCAA). Catalyzes an alkyl-migration followed by a ketol-acid reduction of (S)-2-acetolactate (S2AL) to yield (R)-2,3-dihydroxy-isovalerate. In the isomerase reaction, S2AL is rearranged via a Mg-dependent methyl migration to produce 3-hydroxy-3-methyl-2-ketobutyrate (HMKB). In the reductase reaction, this 2-ketoacid undergoes a metal-dependent reduction by NADPH to yield (R)-2,3-dihydroxy-isovalerate. The polypeptide is Ketol-acid reductoisomerase (NADP(+)) (Nocardia farcinica (strain IFM 10152)).